The sequence spans 364 residues: MYIKNVHLINFRNYDDMYLELSPNTNIFVGNNAQGKTNILESIYYSSIGKSHRTNKDKDLIKWDKNNTYLRTYVSRERLDKTIDINIFKNGKKAITVNKIKIKKISELMGNLNVVMFSPEDLRIIKDYPGNRRKFLDIELCKINNVYYHDLVQYNKILSERNTALKNWNNKINDIIDIYDEQLSKYGAFIIKERNKYLDKLNIIGKNIHKKITNDLEDINFRYLTNIKDFDNAEKELLIVLKKNRKKDLERNSTSIGPHRDDFEVSINNIDTRIFGSQGQQRTAVLTLKFASLEIIKNIIGEYPVLLLDDVLSELDSNRQKFVLNSIDKIQTIITCTGIEEIDKYLHKKQSQLYLVNNGKIKRV.

30–37 is an ATP binding site; it reads GNNAQGKT.

Belongs to the RecF family.

It is found in the cytoplasm. The RecF protein is involved in DNA metabolism; it is required for DNA replication and normal SOS inducibility. RecF binds preferentially to single-stranded, linear DNA. It also seems to bind ATP. In Clostridium botulinum (strain Langeland / NCTC 10281 / Type F), this protein is DNA replication and repair protein RecF.